The chain runs to 1407 residues: DNA-directed RNA polymerase subunit beta' (1407 aa).

Zn(2+) contacts are provided by C70, C72, C85, and C88. 3 residues coordinate Mg(2+): D460, D462, and D464. Residues C814, C889, C896, and C899 each contribute to the Zn(2+) site. The disordered stretch occupies residues 1384–1407 (LVGRSTSSGTEVTSPSKDAIPLGG). Over residues 1386 to 1399 (GRSTSSGTEVTSPS) the composition is skewed to polar residues.

It belongs to the RNA polymerase beta' chain family. The RNAP catalytic core consists of 2 alpha, 1 beta, 1 beta' and 1 omega subunit. When a sigma factor is associated with the core the holoenzyme is formed, which can initiate transcription. Mg(2+) serves as cofactor. Requires Zn(2+) as cofactor.

It carries out the reaction RNA(n) + a ribonucleoside 5'-triphosphate = RNA(n+1) + diphosphate. Its function is as follows. DNA-dependent RNA polymerase catalyzes the transcription of DNA into RNA using the four ribonucleoside triphosphates as substrates. The sequence is that of DNA-directed RNA polymerase subunit beta' from Xylella fastidiosa (strain Temecula1 / ATCC 700964).